A 932-amino-acid chain; its full sequence is Protocadherin gamma-A8 (932 aa).

The N-terminal stretch at 1-29 is a signal peptide; it reads MAAPQSRPRRGELILLCALLGTLWEIGRG. Cadherin domains lie at 30–133, 134–242, 243–347, 348–452, 453–562, and 570–682; these read QIRY…NPKF, QVED…APVF, PHPI…RPEV, IITS…PPTF, PHAS…APEI, and DGST…KPSV. Residues 30–692 are Extracellular-facing; sequence QIRYSVPEET…DPNDSSLTLY (663 aa). An N-linked (GlcNAc...) asparagine glycan is attached at Asn47. Residues Asn414, Asn419, and Asn545 are each glycosylated (N-linked (GlcNAc...) asparagine). Asn685 carries an N-linked (GlcNAc...) asparagine glycan. A helical membrane pass occupies residues 693 to 713; that stretch reads LVVAVAAISCVFLAFVAVLLG. Residues 714-932 lie on the Cytoplasmic side of the membrane; the sequence is LRLRRWHKSR…KKKSGKKEKK (219 aa). Disordered regions lie at residues 804-841 and 902-932; these read ADHG…WPNN and ATLT…KEKK. Residues 810-841 show a composition bias toward polar residues; that stretch reads APPNTDWRFSQAQRPGTSGSQNGDDTGTWPNN. Residues 922–932 show a composition bias toward basic residues; it reads NKKKSGKKEKK.

The protein resides in the cell membrane. Its function is as follows. Potential calcium-dependent cell-adhesion protein. May be involved in the establishment and maintenance of specific neuronal connections in the brain. This chain is Protocadherin gamma-A8 (PCDHGA8), found in Homo sapiens (Human).